A 156-amino-acid chain; its full sequence is Protein CROC-4 (156 aa).

Positions 46-71 (RATSSTTDSSRAPSSPRPPGSTSHCG) are disordered. Positions 48 to 59 (TSSTTDSSRAPS) are enriched in low complexity.

In terms of tissue distribution, expressed throughout the brain in the thalamus, subthalamic nucleus, corpus callosum, hippocampus, substantia nigra, caudate nucleus, and amygdala.

It is found in the nucleus. In terms of biological role, may play a role in FOS signaling pathways involved in development and remodeling of neurons. Promotes transcription of the FOS promoter. The chain is Protein CROC-4 from Homo sapiens (Human).